We begin with the raw amino-acid sequence, 38 residues long: Large ribosomal subunit protein bL36 (38 aa).

Belongs to the bacterial ribosomal protein bL36 family.

This Flavobacterium johnsoniae (strain ATCC 17061 / DSM 2064 / JCM 8514 / BCRC 14874 / CCUG 350202 / NBRC 14942 / NCIMB 11054 / UW101) (Cytophaga johnsonae) protein is Large ribosomal subunit protein bL36.